A 448-amino-acid chain; its full sequence is Glutamyl-tRNA reductase (448 aa).

Substrate is bound by residues 48–51 (TCNR), Ser-100, 105–107 (EDQ), and Gln-111. Cys-49 acts as the Nucleophile in catalysis. Position 180-185 (180-185 (GAGEIG)) interacts with NADP(+).

It belongs to the glutamyl-tRNA reductase family. In terms of assembly, homodimer.

It carries out the reaction (S)-4-amino-5-oxopentanoate + tRNA(Glu) + NADP(+) = L-glutamyl-tRNA(Glu) + NADPH + H(+). It functions in the pathway porphyrin-containing compound metabolism; protoporphyrin-IX biosynthesis; 5-aminolevulinate from L-glutamyl-tRNA(Glu): step 1/2. Its function is as follows. Catalyzes the NADPH-dependent reduction of glutamyl-tRNA(Glu) to glutamate 1-semialdehyde (GSA). This chain is Glutamyl-tRNA reductase, found in Methanosarcina mazei (strain ATCC BAA-159 / DSM 3647 / Goe1 / Go1 / JCM 11833 / OCM 88) (Methanosarcina frisia).